A 311-amino-acid chain; its full sequence is Ribosomal RNA small subunit methyltransferase A (311 aa).

S-adenosyl-L-methionine contacts are provided by Asn-29, Val-31, Gly-56, Glu-77, Asp-107, and Asn-126.

Belongs to the class I-like SAM-binding methyltransferase superfamily. rRNA adenine N(6)-methyltransferase family. RsmA subfamily.

It is found in the cytoplasm. It catalyses the reaction adenosine(1518)/adenosine(1519) in 16S rRNA + 4 S-adenosyl-L-methionine = N(6)-dimethyladenosine(1518)/N(6)-dimethyladenosine(1519) in 16S rRNA + 4 S-adenosyl-L-homocysteine + 4 H(+). Specifically dimethylates two adjacent adenosines (A1518 and A1519) in the loop of a conserved hairpin near the 3'-end of 16S rRNA in the 30S particle. May play a critical role in biogenesis of 30S subunits. The sequence is that of Ribosomal RNA small subunit methyltransferase A from Mycolicibacterium vanbaalenii (strain DSM 7251 / JCM 13017 / BCRC 16820 / KCTC 9966 / NRRL B-24157 / PYR-1) (Mycobacterium vanbaalenii).